A 1537-amino-acid polypeptide reads, in one-letter code: Dicer-like protein 1 (1537 aa).

Residues Ser-38–Asp-68 are disordered. The Helicase ATP-binding domain maps to Leu-133–Leu-314. An ATP-binding site is contributed by Leu-146–Thr-153. The short motif at Asp-259–His-262 is the DEAH box element. The region spanning Glu-459–His-618 is the Helicase C-terminal domain. In terms of domain architecture, Dicer dsRNA-binding fold spans Ala-651–Ala-741. In terms of domain architecture, PAZ spans Asp-891–Ala-1019. 2 RNase III domains span residues Ile-1043–Gly-1202 and Ala-1253–Lys-1405. Mg(2+) is bound by residues Glu-1294, Asp-1391, and Glu-1394. Residues Thr-1439 to Gly-1507 form the DRBM domain. Zn(2+) contacts are provided by Cys-1451, His-1478, Cys-1519, and Cys-1521.

This sequence belongs to the helicase family. Dicer subfamily. Mg(2+) is required as a cofactor. It depends on Mn(2+) as a cofactor.

In terms of biological role, dicer-like endonuclease involved in cleaving double-stranded RNA in the RNA interference (RNAi) pathway. Produces 21 to 25 bp dsRNAs (siRNAs) which target the selective destruction of homologous RNAs leading to sequence-specific suppression of gene expression, called post-transcriptional gene silencing (PTGS). Part of a broad host defense response against viral infection and transposons. This is Dicer-like protein 1 (dcl1) from Aspergillus fumigatus (strain ATCC MYA-4609 / CBS 101355 / FGSC A1100 / Af293) (Neosartorya fumigata).